Consider the following 498-residue polypeptide: U4/U6 small nuclear ribonucleoprotein Prp31 (498 aa).

Coiled coils occupy residues Glu-84–Lys-119 and Asp-180–Ile-214. Positions Ile-214–Glu-332 constitute a Nop domain. The interval Pro-333 to Arg-356 is disordered. The Nuclear localization signal (NLS) signature appears at Arg-350–Glu-363.

It belongs to the PRP31 family. As to quaternary structure, identified in the spliceosome B complex. Component of the U4/U6-U5 tri-snRNP complex. Component of some MLL1/MLL complex.

It localises to the nucleus. The protein localises to the nucleus speckle. The protein resides in the cajal body. Functionally, involved in pre-mRNA splicing as component of the spliceosome. Required for the assembly of the U4/U5/U6 tri-snRNP complex, one of the building blocks of the spliceosome. This chain is U4/U6 small nuclear ribonucleoprotein Prp31 (prpf31), found in Xenopus tropicalis (Western clawed frog).